A 137-amino-acid polypeptide reads, in one-letter code: Prefoldin subunit alpha (137 aa).

The protein belongs to the prefoldin subunit alpha family. Heterohexamer of two alpha and four beta subunits.

Its subcellular location is the cytoplasm. In terms of biological role, molecular chaperone capable of stabilizing a range of proteins. Seems to fulfill an ATP-independent, HSP70-like function in archaeal de novo protein folding. The protein is Prefoldin subunit alpha (pfdA) of Archaeoglobus fulgidus (strain ATCC 49558 / DSM 4304 / JCM 9628 / NBRC 100126 / VC-16).